A 687-amino-acid chain; its full sequence is Chloride channel protein ClC-Kb (687 aa).

The Cytoplasmic portion of the chain corresponds to 1–50 (MEEFVGLREGSSGNPVTLQELWGPCPRIRRGIRGGLEWLKQKLFRLGEDW). 2 helical membrane passes run 51–82 (YFLMTLGVLMALVSCAMDLAVESVVRAHQWLY) and 91–111 (LRYLSWTVYPVALVSFSSGFS). An intramembrane region (helical) is located at residues 116 to 127 (PSSGGSGIPEVK). Residue Ser121 participates in chloride binding. 2 consecutive transmembrane segments (helical) span residues 141-160 (IKNFGAKVVGLSCTLACGST) and 161-180 (LFLGKVGPFVHLSVMMAAYL). Asn193 carries an N-linked (GlcNAc...) asparagine glycan. An intramembrane region (helical) is located at residues 203–224 (AAAAVGVATVFAAPFSGVLFSI). Residues 236-255 (YWRGFFAATCGAFMFRLLAV) form a helical membrane-spanning segment. Positions 259, 261, 278, and 281 each coordinate Ca(2+). A run of 2 helical transmembrane segments spans residues 282-310 (IFFFVALGGLCGILGSAYLFCQRIFFGFI) and 325-342 (PVYSALATLVLASITYPP). An intramembrane region (helical) is located at residues 349 to 360 (ASRLSMKQHLDS). The next 2 membrane-spanning stretches (helical) occupy residues 400–420 (GTLAFFLVMKFWMLILATTIP) and 421–440 (MPAGYFMPIFVYGAAIGRLF). Residue Phe426 coordinates chloride. The segment at residues 464 to 496 (GGYALAGAAAFSGAVTHTISTALLAFEVTGQIV) is an intramembrane region (helical). The chain crosses the membrane as a helical span at residues 500-520 (PVLMAVLAANAIAQSCQPSFY). At 521-687 (DGTVIVKKLP…SNLTNPPAPK (167 aa)) the chain is on the cytoplasmic side. CBS domains follow at residues 551-609 (MNHS…EPPS) and 626-684 (CPTE…TNPP).

It belongs to the chloride channel (TC 2.A.49) family. CLCNKB subfamily. Homodimer. Interacts with BSND. In terms of processing, N-glycosylated.

It is found in the basolateral cell membrane. It catalyses the reaction chloride(in) = chloride(out). The catalysed reaction is iodide(out) = iodide(in). The enzyme catalyses nitrate(in) = nitrate(out). It carries out the reaction bromide(in) = bromide(out). With respect to regulation, activated by extracellular Ca(2+) and inhibited by extracellular acidic pH. Functionally, anion-selective channel permeable to small monovalent anions with ion selectivity for chloride &gt; bromide &gt; nitrate &gt; iodide. Forms a homodimeric channel where each subunit has its own ion conduction pathway. May conduct double-barreled currents controlled by two types of gates, two fast gates that control each subunit independently and a slow common gate that opens and shuts off both subunits simultaneously. Assembles with the regulatory subunit BSND/Barttin for sorting at the basolateral plasma membrane domain and functional switch to the ion conducting state. CLCNKB:BSND channels display mostly a linear current-voltage relationship controlled by common gate. Mediates chloride conductance along nephron segments, namely the thick ascending limb of Henle's loop, convoluted tubule and the collecting duct, contributing to the maintenance of systemic acid-base and electrolyte homeostasis. Conducts chloride currents in the stria vascularis of the inner ear to establish the endocochlear potential necessary for normal hearing. The chain is Chloride channel protein ClC-Kb from Homo sapiens (Human).